Consider the following 271-residue polypeptide: Putative pyruvate, phosphate dikinase regulatory protein (271 aa).

147–154 is a binding site for ADP; the sequence is GLSRTSKT.

This sequence belongs to the pyruvate, phosphate/water dikinase regulatory protein family. PDRP subfamily.

It catalyses the reaction N(tele)-phospho-L-histidyl/L-threonyl-[pyruvate, phosphate dikinase] + ADP = N(tele)-phospho-L-histidyl/O-phospho-L-threonyl-[pyruvate, phosphate dikinase] + AMP + H(+). It carries out the reaction N(tele)-phospho-L-histidyl/O-phospho-L-threonyl-[pyruvate, phosphate dikinase] + phosphate + H(+) = N(tele)-phospho-L-histidyl/L-threonyl-[pyruvate, phosphate dikinase] + diphosphate. Bifunctional serine/threonine kinase and phosphorylase involved in the regulation of the pyruvate, phosphate dikinase (PPDK) by catalyzing its phosphorylation/dephosphorylation. The sequence is that of Putative pyruvate, phosphate dikinase regulatory protein from Clostridium tetani (strain Massachusetts / E88).